A 312-amino-acid chain; its full sequence is Ribosomal RNA small subunit methyltransferase H (312 aa).

S-adenosyl-L-methionine is bound by residues 33–35 (GGY), aspartate 51, phenylalanine 78, aspartate 97, and glutamine 104.

The protein belongs to the methyltransferase superfamily. RsmH family.

It is found in the cytoplasm. The catalysed reaction is cytidine(1402) in 16S rRNA + S-adenosyl-L-methionine = N(4)-methylcytidine(1402) in 16S rRNA + S-adenosyl-L-homocysteine + H(+). Its function is as follows. Specifically methylates the N4 position of cytidine in position 1402 (C1402) of 16S rRNA. The protein is Ribosomal RNA small subunit methyltransferase H of Orientia tsutsugamushi (strain Boryong) (Rickettsia tsutsugamushi).